The sequence spans 467 residues: MVRVSRGCQSCVDAKLQSTPSPSPSKSPSPTESPEQCLQKRQSGEQVVLPSRPFPRTSPRAEYRPVPLLALDGYINPSLTVTAVNSQQAQVFTNYVLASFPCFFRCTETRVPVNWVEYVDQRGSSMNSCFDWAVRACTSAYLGSLHDDQRYLVASRSLYHRALRGLGNLLSSEKTAKSDEVLASAIVLAIFEKHNCSSPDAWLRHAAGIRTLMKLRGPKAHLEGFGRAMYIVYRNFLITAALVEGEACFLEEPEWQALNEEIAASDAKLPTSSLYTDVVERGFLSVIKIPGLVKRTRELQCLSSKKRAEVQPALLQDVQATRAGLRGIYTEFGVAVSMLRSGQDENDTFVGPVPNFFFEGYSSLFARGVRLGLLILNYLIVIMDPKQRATIDSENFMLLNDMTRSQRSTHPALEFKLPLTPPKSPGRPGLVVRSLITEETREPPTTDWMDRITSTMGLEAVHVSLVG.

Residues 1–60 (MVRVSRGCQSCVDAKLQSTPSPSPSKSPSPTESPEQCLQKRQSGEQVVLPSRPFPRTSPR) are disordered.

Involved in osmoadaptation. This is an uncharacterized protein from Emericella nidulans (strain FGSC A4 / ATCC 38163 / CBS 112.46 / NRRL 194 / M139) (Aspergillus nidulans).